The chain runs to 576 residues: MSVDTSSTLSTVTDANLHSRFHSRLVPFTHHFSLSQPKRISSIRCQSINTDKKKSSRNLLGNASNLLTDLLSGGSIGSMPIAEGAVSDLLGRPLFFSLYDWFLEHGAVYKLAFGPKAFVVVSDPIVARHILRENAFSYDKGVLADILEPIMGKGLIPADLDTWKQRRRVIAPAFHNSYLEAMVKIFTTCSERTILKFNKLLEGEGYDGPDSIELDLEAEFSSLALDIIGLGVFNYDFGSVTKESPVIKAVYGTLFEAEHRSTFYIPYWKIPLARWIVPRQRKFQDDLKVINTCLDGLIRNAKESRQETDVEKLQQRDYLNLKDASLLRFLVDMRGADVDDRQLRDDLMTMLIAGHETTAAVLTWAVFLLAQNPSKMKKAQAEVDLVLGTGRPTFESLKELQYIRLIVVEALRLYPQPPLLIRRSLKSDVLPGGHKGEKDGYAIPAGTDVFISVYNLHRSPYFWDRPDDFEPERFLVQNKNEEIEGWAGLDPSRSPGALYPNEVISDFAFLPFGGGPRKCVGDQFALMESTVALTMLLQNFDVELKGTPESVELVTGATIHTKNGMWCRLKKRSNLR.

The N-terminal 44 residues, 1-44 (MSVDTSSTLSTVTDANLHSRFHSRLVPFTHHFSLSQPKRISSIR), are a transit peptide targeting the chloroplast. Residue C519 participates in heme binding.

It belongs to the cytochrome P450 family. Requires heme as cofactor.

The protein resides in the plastid. It is found in the chloroplast membrane. The sequence is that of Cytochrome P450 97B2, chloroplastic (CYP97B2) from Glycine max (Soybean).